Reading from the N-terminus, the 236-residue chain is 2-C-methyl-D-erythritol 4-phosphate cytidylyltransferase (236 aa).

Belongs to the IspD/TarI cytidylyltransferase family. IspD subfamily. Homodimer.

It carries out the reaction 2-C-methyl-D-erythritol 4-phosphate + CTP + H(+) = 4-CDP-2-C-methyl-D-erythritol + diphosphate. It participates in isoprenoid biosynthesis; isopentenyl diphosphate biosynthesis via DXP pathway; isopentenyl diphosphate from 1-deoxy-D-xylulose 5-phosphate: step 2/6. Catalyzes the formation of 4-diphosphocytidyl-2-C-methyl-D-erythritol from CTP and 2-C-methyl-D-erythritol 4-phosphate (MEP). The protein is 2-C-methyl-D-erythritol 4-phosphate cytidylyltransferase of Escherichia coli O7:K1 (strain IAI39 / ExPEC).